A 163-amino-acid chain; its full sequence is MDDMLTKIQERTKCLIYILMERQIRAARLEQLLLDYISCKPHDKLCKSSMEGFTTERSLKYTRDCPQYAAVTTSQPRYRIEKRSKRFPKTAQMELENWYTENEDNPYLSKRDLQQLVHKTGLCAPQVRNWVSNRRRKERTLTISKELSDLLNQDTRCSPNDVV.

A DNA-binding region (homeobox; TALE-type) is located at residues 80–142; it reads IEKRSKRFPK…NRRRKERTLT (63 aa).

This sequence belongs to the TALE/M-ATYP homeobox family.

Its subcellular location is the nucleus. Functionally, mating type proteins are sequence specific DNA-binding proteins that act as master switches in yeast differentiation by controlling gene expression in a cell type-specific fashion. The sequence is that of Mating-type protein ALPHA2 (MATALPHA2) from Pichia angusta (Yeast).